Reading from the N-terminus, the 147-residue chain is uncharacterized protein (147 aa).

Helical transmembrane passes span 35-55 (TIQL…FGNH) and 62-82 (IWLL…LFEP).

Has been detected in a cytochrome bc1-aa3 supercomplex; its deletion however leaves complex activity unaffected.

It is found in the cell membrane. This is an uncharacterized protein from Corynebacterium glutamicum (strain ATCC 13032 / DSM 20300 / JCM 1318 / BCRC 11384 / CCUG 27702 / LMG 3730 / NBRC 12168 / NCIMB 10025 / NRRL B-2784 / 534).